The chain runs to 199 residues: Imidazoleglycerol-phosphate dehydratase (199 aa).

It belongs to the imidazoleglycerol-phosphate dehydratase family.

The protein resides in the cytoplasm. It carries out the reaction D-erythro-1-(imidazol-4-yl)glycerol 3-phosphate = 3-(imidazol-4-yl)-2-oxopropyl phosphate + H2O. It functions in the pathway amino-acid biosynthesis; L-histidine biosynthesis; L-histidine from 5-phospho-alpha-D-ribose 1-diphosphate: step 6/9. This chain is Imidazoleglycerol-phosphate dehydratase, found in Paramagnetospirillum magneticum (strain ATCC 700264 / AMB-1) (Magnetospirillum magneticum).